The chain runs to 192 residues: Cytidylate kinase (192 aa).

Residue 7-15 (GPPGSGKST) participates in ATP binding.

This sequence belongs to the cytidylate kinase family. Type 2 subfamily.

It localises to the cytoplasm. The catalysed reaction is CMP + ATP = CDP + ADP. The enzyme catalyses dCMP + ATP = dCDP + ADP. In Halobacterium salinarum (strain ATCC 29341 / DSM 671 / R1), this protein is Cytidylate kinase.